The chain runs to 360 residues: MFVDSVEIIIASGKGGPGMVSFRREKFVIKGGPDGGDGGDGGDVYFEVDNNTDTLASFRGTKHHKAKNGAPGGTRNCAGKKGEDKIIVVPPGTQVFVDDALWLDLVEPKERVLALKGGKGGLGNAHFKSATKQQPTYAQKGLEGVEKCVRLELKLIADIGLVGFPNAGKSTLISTISNAKPKIANYEFTTLVPNLGVVSVDEKSEFLMADIPGIIEGASEGKGLGISFLKHIERTKVLAFVLDASRLDLGIKEQYQRLRLELEKFSPALANKPFGVLLNKCDVVENIDEMAKDFCTFLNLEAQKLEAFGLEPYLGFLHPHLTSDFENNPNEKSALFVLPLSALSALNTHALKFVLLEALP.

The region spanning 1–156 (MFVDSVEIII…KCVRLELKLI (156 aa)) is the Obg domain. The 204-residue stretch at 157–360 (ADIGLVGFPN…LKFVLLEALP (204 aa)) folds into the OBG-type G domain. GTP-binding positions include 163-170 (GFPNAGKS), 188-192 (FTTLV), 210-213 (DIPG), 279-282 (NKCD), and 341-343 (SAL). Mg(2+) contacts are provided by S170 and T190.

This sequence belongs to the TRAFAC class OBG-HflX-like GTPase superfamily. OBG GTPase family. Monomer. Mg(2+) serves as cofactor.

Its subcellular location is the cytoplasm. Functionally, an essential GTPase which binds GTP, GDP and possibly (p)ppGpp with moderate affinity, with high nucleotide exchange rates and a fairly low GTP hydrolysis rate. Plays a role in control of the cell cycle, stress response, ribosome biogenesis and in those bacteria that undergo differentiation, in morphogenesis control. The sequence is that of GTPase Obg from Helicobacter pylori (strain Shi470).